The following is a 67-amino-acid chain: Large ribosomal subunit protein bL32 (67 aa).

Basic residues predominate over residues 1–19 (MAVPKRKMSRANTRARRSQ). Residues 1 to 21 (MAVPKRKMSRANTRARRSQWK) form a disordered region.

It belongs to the bacterial ribosomal protein bL32 family.

The chain is Large ribosomal subunit protein bL32 from Micrococcus luteus (strain ATCC 4698 / DSM 20030 / JCM 1464 / CCM 169 / CCUG 5858 / IAM 1056 / NBRC 3333 / NCIMB 9278 / NCTC 2665 / VKM Ac-2230) (Micrococcus lysodeikticus).